An 82-amino-acid polypeptide reads, in one-letter code: MDPLVASASVLAAALAIGLASLGPGIGQGNASGQAVEGIARQPEAEGKIRGTLLLTLAFMESLTIYGLVIALVLLFANPFAS.

A run of 2 helical transmembrane segments spans residues 3 to 23 (PLVA…ASLG) and 57 to 77 (LAFM…LLFA).

Belongs to the ATPase C chain family. As to quaternary structure, F-type ATPases have 2 components, F(1) - the catalytic core - and F(0) - the membrane proton channel. F(1) has five subunits: alpha(3), beta(3), gamma(1), delta(1), epsilon(1). F(0) has four main subunits: a(1), b(1), b'(1) and c(10-14). The alpha and beta chains form an alternating ring which encloses part of the gamma chain. F(1) is attached to F(0) by a central stalk formed by the gamma and epsilon chains, while a peripheral stalk is formed by the delta, b and b' chains.

The protein localises to the cellular thylakoid membrane. In terms of biological role, f(1)F(0) ATP synthase produces ATP from ADP in the presence of a proton or sodium gradient. F-type ATPases consist of two structural domains, F(1) containing the extramembraneous catalytic core and F(0) containing the membrane proton channel, linked together by a central stalk and a peripheral stalk. During catalysis, ATP synthesis in the catalytic domain of F(1) is coupled via a rotary mechanism of the central stalk subunits to proton translocation. Its function is as follows. Key component of the F(0) channel; it plays a direct role in translocation across the membrane. A homomeric c-ring of between 10-14 subunits forms the central stalk rotor element with the F(1) delta and epsilon subunits. The sequence is that of ATP synthase subunit c from Synechococcus sp. (strain PCC 6716).